The primary structure comprises 552 residues: Chaperonin GroEL (552 aa).

ATP is bound by residues 29-32, lysine 50, 86-90, glycine 420, and aspartate 501; these read TAGP and DGTTT.

The protein belongs to the chaperonin (HSP60) family. Forms a cylinder of 14 subunits composed of two heptameric rings stacked back-to-back. Interacts with the co-chaperonin GroES.

It is found in the cytoplasm. It catalyses the reaction ATP + H2O + a folded polypeptide = ADP + phosphate + an unfolded polypeptide.. Together with its co-chaperonin GroES, plays an essential role in assisting protein folding. The GroEL-GroES system forms a nano-cage that allows encapsulation of the non-native substrate proteins and provides a physical environment optimized to promote and accelerate protein folding. In Wolbachia pipientis subsp. Culex pipiens (strain wPip), this protein is Chaperonin GroEL.